The following is an 87-amino-acid chain: uncharacterized protein (87 aa).

Residues 25-47 (FFWEVCNMILFIIIALCGYLLFS) traverse the membrane as a helical segment.

The protein localises to the membrane. This is an uncharacterized protein from Bacillus subtilis (strain 168).